The chain runs to 296 residues: CCAAT/enhancer-binding protein beta (296 aa).

A required for Lys-133 sumoylation region spans residues Met-1 to Met-22. Arg-3 carries the post-translational modification Asymmetric dimethylarginine; by CARM1. Positions Met-22 to Ala-104 are required for MYC transcriptional repression. An N6-acetyllysine; alternate modification is found at Lys-39. Position 39 is an N6-methylated lysine; alternate (Lys-39). 2 positions are modified to N6-acetyllysine; by KAT2A and KAT2B: Lys-98 and Lys-101. Lys-102 carries the post-translational modification N6-acetyllysine; by KAT2A and KAT2B; alternate. Residues Lys-102 and Lys-133 each participate in a glycyl lysine isopeptide (Lys-Gly) (interchain with G-Cter in SUMO2); alternate cross-link. Residue Lys-133 forms a Glycyl lysine isopeptide (Lys-Gly) (interchain with G-Cter in SUMO); alternate linkage. Lys-144 participates in a covalent cross-link: Glycyl lysine isopeptide (Lys-Gly) (interchain with G-Cter in SUMO2). The disordered stretch occupies residues Ser-171–Ala-199. Thr-179 carries the phosphothreonine; by GSK3-beta modification. O-linked (GlcNAc) serine glycans are attached at residues Ser-180 and Ser-181. Phosphoserine; by GSK3-beta is present on Ser-184. Thr-188 carries the post-translational modification Phosphothreonine; by RPS6KA1, CDK2 and MAPK. Glycyl lysine isopeptide (Lys-Gly) (interchain with G-Cter in SUMO2) cross-links involve residues Lys-211 and Lys-213. Thr-217 carries the phosphothreonine; by RPS6KA1 and PKC/PRKCA modification. A bZIP domain is found at Ser-222–Leu-285. Positions Lys-226–Arg-246 are basic motif. Residue Ser-239 is modified to Phosphoserine; by PKC/PRKCA. A leucine-zipper region spans residues Leu-248–Leu-255. Residue Ser-276 is modified to Phosphoserine; by CaMK2. Lys-283 is covalently cross-linked (Glycyl lysine isopeptide (Lys-Gly) (interchain with G-Cter in SUMO2)).

This sequence belongs to the bZIP family. C/EBP subfamily. As to quaternary structure, binds DNA as a homodimer and as a heterodimer. Interacts with ATF4. Binds DNA as a heterodimer with ATF4. Interacts with MYB; within the complex, MYB and CEBPB bind to different promoter regions. Can form stable heterodimers with CEBPA, CEBPD and CEBPE. Interacts with SIX1. Isoform 2 and isoform 3 also form heterodimers. Interacts with TRIM28 and PTGES2. Interacts with PRDM16. Interacts with CCDC85B. Forms a complex with THOC5. Interacts with ZNF638; this interaction increases transcriptional activation. Interacts with CIDEA and CIDEC. Interaction with CIDEA increases transcriptional activation of a subset of CEBPB downstream target genes, including ID2, IGF1, PRLR, SOCS1, SOCS3, XDH. Interaction with CIDEC increases transcriptional activation of SOCS1, SOCS3, TGFB1, TGFBR1, ID2 and XDH. Interacts with DDIT3/CHOP. Interacts with EP300; recruits EP300 to chromatin. Interacts with RORA; the interaction disrupts interaction with EP300. Interacts (not methylated) with MED23, MED26, SMARCA2, SMARCB1 and SMARCC1. Interacts with KAT2A and KAT2B. Interacts with ATF5; EP300 is required for ATF5 and CEBPB interaction and DNA binding. Interacts with NFE2L1; the heterodimer represses expression of DSPP during odontoblast differentiation. Sumoylated by polymeric chains of SUMO2 or SUMO3. Sumoylation at Lys-133 is required for inhibition of T-cells proliferation. In adipocytes, sumoylation at Lys-133 by PIAS1 leads to ubiquitination and subsequent proteasomal degradation. Desumoylated by SENP2, which abolishes ubiquitination and stabilizes protein levels. In terms of processing, ubiquitinated, leading to proteasomal degradation. Post-translationally, phosphorylated at Thr-188 by MAPK and CDK2, serves to prime phosphorylation at Thr-179 and Ser-184 by GSK3B and acquire DNA-binding as well as transactivation activities, required to induce adipogenesis. MAPK and CDK2 act sequentially to maintain Thr-188 in the primed phosphorylated state during mitotical cloning expansion and thereby progression of terminal differentiation. Phosphorylation at Thr-217 enhances transactivation activity. Phosphorylation at Ser-276 in response to calcium increases transactivation activity. Phosphorylated at Thr-188 by RPS6KA1. O-glycosylated, glycosylation at Ser-180 and Ser-181 prevents phosphorylation on Thr-188, Ser-184 and Thr-179 and DNA binding activity which delays the adipocyte differentiation program. In terms of processing, acetylated. Acetylation at Lys-39 is an important and dynamic regulatory event that contributes to its ability to transactivate target genes, including those associated with adipogenesis and adipocyte function. Deacetylation by HDAC1 represses its transactivation activity. Acetylated by KAT2A and KAT2B within a cluster of lysine residues between amino acids 98-102, this acetylation is strongly induced by glucocorticoid treatment and enhances transactivation activity. Post-translationally, methylated. Methylation at Arg-3 by CARM1 and at Lys-39 by EHMT2, inhibits transactivation activity. Methylation is probably inhibited by phosphorylation at Thr-188. In terms of tissue distribution, abundantly expressed in myoblasts. Enriched in brown adipose tissue (BAT) versus white adipose tissue (WAT). Expressed in hepatocytes (at protein level). Expressed in T lymphocytes. The expression in granulosa cells of antral follicles is induced by luteinizing hormone. Expressed in chondrocytes and osteoblasts (at protein level).

It is found in the nucleus. It localises to the cytoplasm. In terms of biological role, important transcription factor regulating the expression of genes involved in immune and inflammatory responses. Also plays a significant role in adipogenesis, as well as in the gluconeogenic pathway, liver regeneration, and hematopoiesis. The consensus recognition site is 5'-T[TG]NNGNAA[TG]-3'. Its functional capacity is governed by protein interactions and post-translational protein modifications. During early embryogenesis, plays essential and redundant roles with CEBPA. Has a promitotic effect on many cell types such as hepatocytes and adipocytes but has an antiproliferative effect on T-cells by repressing MYC expression, facilitating differentiation along the T-helper 2 lineage. Binds to regulatory regions of several acute-phase and cytokines genes and plays a role in the regulation of acute-phase reaction and inflammation. Also plays a role in intracellular bacteria killing. During adipogenesis, is rapidly expressed and, after activation by phosphorylation, induces CEBPA and PPARG, which turn on the series of adipocyte genes that give rise to the adipocyte phenotype. The delayed transactivation of the CEBPA and PPARG genes by CEBPB appears necessary to allow mitotic clonal expansion and thereby progression of terminal differentiation. Essential for female reproduction because of a critical role in ovarian follicle development. Restricts osteoclastogenesis. Together with NFE2L1; represses expression of DSPP during odontoblast differentiation. Functionally, essential for gene expression induction in activated macrophages. Plays a major role in immune responses such as CD4(+) T-cell response, granuloma formation and endotoxin shock. Not essential for intracellular bacteria killing. Its function is as follows. Acts as a dominant negative through heterodimerization with isoform 2. Promotes osteoblast differentiation and osteoclastogenesis. This Mus musculus (Mouse) protein is CCAAT/enhancer-binding protein beta.